Reading from the N-terminus, the 147-residue chain is UPF0208 membrane protein SO_2914 (147 aa).

The next 2 helical transmembrane spans lie at 40–60 (LAILVMPVLAVLASVSQLYTY) and 68–88 (ALTIALFFISLPLQGLLWLGW).

The protein belongs to the UPF0208 family.

The protein localises to the cell inner membrane. The polypeptide is UPF0208 membrane protein SO_2914 (Shewanella oneidensis (strain ATCC 700550 / JCM 31522 / CIP 106686 / LMG 19005 / NCIMB 14063 / MR-1)).